The sequence spans 538 residues: Bifunctional purine biosynthesis protein PurH (538 aa).

Positions 8-158 (IPAPDKVEIK…KNHAYVTILT (151 aa)) constitute an MGS-like domain.

Belongs to the PurH family.

The enzyme catalyses (6R)-10-formyltetrahydrofolate + 5-amino-1-(5-phospho-beta-D-ribosyl)imidazole-4-carboxamide = 5-formamido-1-(5-phospho-D-ribosyl)imidazole-4-carboxamide + (6S)-5,6,7,8-tetrahydrofolate. It catalyses the reaction IMP + H2O = 5-formamido-1-(5-phospho-D-ribosyl)imidazole-4-carboxamide. It participates in purine metabolism; IMP biosynthesis via de novo pathway; 5-formamido-1-(5-phospho-D-ribosyl)imidazole-4-carboxamide from 5-amino-1-(5-phospho-D-ribosyl)imidazole-4-carboxamide (10-formyl THF route): step 1/1. Its pathway is purine metabolism; IMP biosynthesis via de novo pathway; IMP from 5-formamido-1-(5-phospho-D-ribosyl)imidazole-4-carboxamide: step 1/1. This Rhizobium etli (strain ATCC 51251 / DSM 11541 / JCM 21823 / NBRC 15573 / CFN 42) protein is Bifunctional purine biosynthesis protein PurH.